The following is a 346-amino-acid chain: Phosphate acyltransferase (346 aa).

The protein belongs to the PlsX family. In terms of assembly, homodimer. Probably interacts with PlsY.

The protein localises to the cytoplasm. The catalysed reaction is a fatty acyl-[ACP] + phosphate = an acyl phosphate + holo-[ACP]. The protein operates within lipid metabolism; phospholipid metabolism. In terms of biological role, catalyzes the reversible formation of acyl-phosphate (acyl-PO(4)) from acyl-[acyl-carrier-protein] (acyl-ACP). This enzyme utilizes acyl-ACP as fatty acyl donor, but not acyl-CoA. The sequence is that of Phosphate acyltransferase from Delftia acidovorans (strain DSM 14801 / SPH-1).